An 874-amino-acid polypeptide reads, in one-letter code: Probable leucine--tRNA ligase, cytoplasmic (874 aa).

A 'HIGH' region motif is present at residues 36 to 46; sequence PYMNGRLHLGH. The 'KMSKS' region signature appears at 544–548; that stretch reads KMSKS. Residue K547 coordinates ATP.

This sequence belongs to the class-I aminoacyl-tRNA synthetase family.

Its subcellular location is the cytoplasm. It catalyses the reaction tRNA(Leu) + L-leucine + ATP = L-leucyl-tRNA(Leu) + AMP + diphosphate. This is Probable leucine--tRNA ligase, cytoplasmic from Encephalitozoon cuniculi (strain GB-M1) (Microsporidian parasite).